The sequence spans 495 residues: Probable aspartic-type endopeptidase OPSB (495 aa).

The first 19 residues, 1-19 (MRGDSFIWSLATAIPLLST), serve as a signal peptide directing secretion. A Peptidase A1 domain is found at 73-408 (YFCNLTLGTP…DLDNNEISIA (336 aa)). The N-linked (GlcNAc...) asparagine glycan is linked to asparagine 76. Aspartate 91 is an active-site residue. N-linked (GlcNAc...) asparagine glycosylation occurs at asparagine 136. Aspartate 290 is an active-site residue. Asparagine 413 carries N-linked (GlcNAc...) asparagine glycosylation. Residues 448–470 (TGLPGVETGVPGSRPPSSKAAGQ) form a disordered region. A lipid anchor (GPI-anchor amidated alanine) is attached at alanine 467. Residues 468-495 (AGQAKRPDFVLGVAAVGLAGAGMLFAAM) constitute a propeptide, removed in mature form.

It belongs to the peptidase A1 family.

Its subcellular location is the cell membrane. Functionally, probable GPI-anchored aspartic-type endopeptidase which contributes to virulence. The protein is Probable aspartic-type endopeptidase OPSB (OPSB) of Trichophyton verrucosum (strain HKI 0517).